The following is a 61-amino-acid chain: Small ribosomal subunit protein uS14 (61 aa).

Positions 24, 27, 40, and 43 each coordinate Zn(2+).

The protein belongs to the universal ribosomal protein uS14 family. Zinc-binding uS14 subfamily. Part of the 30S ribosomal subunit. Contacts proteins S3 and S10. Requires Zn(2+) as cofactor.

Functionally, binds 16S rRNA, required for the assembly of 30S particles and may also be responsible for determining the conformation of the 16S rRNA at the A site. The chain is Small ribosomal subunit protein uS14 from Streptococcus thermophilus (strain ATCC BAA-491 / LMD-9).